The primary structure comprises 178 residues: ATP-dependent protease subunit HslV (178 aa).

Thr-7 is a catalytic residue. Na(+)-binding residues include Gly-162, Cys-165, and Thr-168.

This sequence belongs to the peptidase T1B family. HslV subfamily. A double ring-shaped homohexamer of HslV is capped on each side by a ring-shaped HslU homohexamer. The assembly of the HslU/HslV complex is dependent on binding of ATP.

It localises to the cytoplasm. It carries out the reaction ATP-dependent cleavage of peptide bonds with broad specificity.. With respect to regulation, allosterically activated by HslU binding. Its function is as follows. Protease subunit of a proteasome-like degradation complex believed to be a general protein degrading machinery. The chain is ATP-dependent protease subunit HslV from Sulfurihydrogenibium sp. (strain YO3AOP1).